The sequence spans 430 residues: Citrate synthase (430 aa).

Residues His-305 and Asp-363 contribute to the active site.

Belongs to the citrate synthase family. Homohexamer.

The enzyme catalyses oxaloacetate + acetyl-CoA + H2O = citrate + CoA + H(+). It participates in carbohydrate metabolism; tricarboxylic acid cycle; isocitrate from oxaloacetate: step 1/2. With respect to regulation, allosterically inhibited by NADH. This chain is Citrate synthase (gltA), found in Coxiella burnetii (strain RSA 493 / Nine Mile phase I).